A 346-amino-acid chain; its full sequence is Short-chain dehydrogenase/reductase bet4 (346 aa).

Residues 1–35 (MTPAKAPSHAKKPEAGSQPISSMWTQMFPPKPTYT) form a disordered region. 4 residues coordinate NADP(+): Val56, Lys80, Asp105, and Asn132. Ser191 serves as the catalytic Proton donor. Positions 222 and 226 each coordinate NADP(+). Tyr222 serves as the catalytic Proton acceptor. Catalysis depends on Lys226, which acts as the Lowers pKa of active site Tyr.

This sequence belongs to the short-chain dehydrogenases/reductases (SDR) family.

It catalyses the reaction dehydroprobetaenone I + AH2 = probetaenone I + A. The protein operates within mycotoxin biosynthesis. Functionally, short-chain dehydrogenase/reductase; part of the gene cluster that mediates the biosynthesis of betaenones, phytotoxic polyketides involved in leaf spot disease in sugar beets. The first step of the pathway is the synthesis of dehydroprobetaenone I by the polyketide synthase bet1 and the enoyl reductase bet3 via condensation of one acetyl-CoA starter unit with 7 malonyl-CoA units and 5 methylations. The C-terminal reductase (R) domain of bet1 catalyzes the reductive release of the polyketide chain. Because bet1 lacks a designated enoylreductase (ER) domain, the required activity is provided the enoyl reductase bet3. The short-chain dehydrogenase/reductase bet4 then catalyzes reduction of dehydroprobetaenone I to probetaenone I. The cytochrome P450 monooxygenase bet2 catalyzes successive epoxidation, oxidation (resulting from epoxide opening) and hydroxylation to install a tertiary alcohol in the decaline ring to yield betaenone C from dehydroprobetaenone I and betaenone B from probetaenone I. The FAD-linked oxidoreductase (orf1) is probably responsible for the conversion of betaenone C to betaenone A via an intramolecular aldol reaction between C-1 and C-17 to form the bridged tricyclic system in betaenone A. The sequence is that of Short-chain dehydrogenase/reductase bet4 from Neocamarosporium betae (Beet black rot fungus).